Consider the following 438-residue polypeptide: ATP synthase subunit alpha, chloroplastic (438 aa).

170 to 177 (GDRQTGKT) lines the ATP pocket.

This sequence belongs to the ATPase alpha/beta chains family. F-type ATPases have 2 components, CF(1) - the catalytic core - and CF(0) - the membrane proton channel. CF(1) has five subunits: alpha(3), beta(3), gamma(1), delta(1), epsilon(1). CF(0) has four main subunits: a, b, b' and c.

The protein resides in the plastid. Its subcellular location is the chloroplast thylakoid membrane. It catalyses the reaction ATP + H2O + 4 H(+)(in) = ADP + phosphate + 5 H(+)(out). Produces ATP from ADP in the presence of a proton gradient across the membrane. The alpha chain is a regulatory subunit. This Ochrosphaera neapolitana protein is ATP synthase subunit alpha, chloroplastic.